The primary structure comprises 430 residues: Methylenetetrahydrofolate--tRNA-(uracil-5-)-methyltransferase TrmFO (430 aa).

FAD is bound at residue 9-14 (GAGLAG).

The protein belongs to the MnmG family. TrmFO subfamily. Requires FAD as cofactor.

Its subcellular location is the cytoplasm. The catalysed reaction is uridine(54) in tRNA + (6R)-5,10-methylene-5,6,7,8-tetrahydrofolate + NADH + H(+) = 5-methyluridine(54) in tRNA + (6S)-5,6,7,8-tetrahydrofolate + NAD(+). It catalyses the reaction uridine(54) in tRNA + (6R)-5,10-methylene-5,6,7,8-tetrahydrofolate + NADPH + H(+) = 5-methyluridine(54) in tRNA + (6S)-5,6,7,8-tetrahydrofolate + NADP(+). Catalyzes the folate-dependent formation of 5-methyl-uridine at position 54 (M-5-U54) in all tRNAs. The sequence is that of Methylenetetrahydrofolate--tRNA-(uracil-5-)-methyltransferase TrmFO from Fervidobacterium nodosum (strain ATCC 35602 / DSM 5306 / Rt17-B1).